Consider the following 132-residue polypeptide: Mite allergen Der p 5 (132 aa).

Immunodominant conformational IgE-binding epitope stretches follow at residues 25-53 and 102-132; these read DYQNEFDFLLMERIHEQIKKGELALFYLQ and EQYNLEMAKKSGDILERDLKKEEARVKKIEV.

Belongs to the mite group 5 allergen family. As to quaternary structure, monomer. Trimer of homodimers. Oligomerizes in a concentration-dependent manner.

The chain is Mite allergen Der p 5 (DERP5) from Dermatophagoides pteronyssinus (European house dust mite).